The sequence spans 594 residues: DELLA protein 1 (594 aa).

Positions 1-36 are disordered; that stretch reads MKREHQESFGGGVISNNNKTNTNHLNSSKNINFGEC. Positions 15–30 are enriched in low complexity; the sequence is SNNNKTNTNHLNSSKN. Positions 61 to 65 match the DELLA motif motif; sequence DELLA. Residues 207–587 enclose the GRAS domain; that stretch reads VDTQETGVRL…RSLIATSAWK (381 aa). A leucine repeat I (LRI) region spans residues 214–268; sequence VRLVHTLMACAEAIQQKNLKLAEALVKHISLLASLQTGAMRKVASYFAQALARRI. Residues 216 to 253 are required for possible homodimerization; it reads LVHTLMACAEAIQQKNLKLAEALVKHISLLASLQTGAM. Residues 221–225 carry the LxCxE motif; degenerate motif; that stretch reads MACAE. Residues 285 to 350 are VHIID; the sequence is HMHFYESSPY…GGPPTFRLTG (66 aa). Positions 316 to 320 match the VHIID motif; that stretch reads VHVID. Residues 364-396 form a leucine repeat II (LRII) region; it reads QVGWKLAQLAQTIGVQFEFRGFVCNSIADLDPN. Residues 406 to 508 form a PFYRE region; it reads VAVNSVFELH…EIYLGKQICN (103 aa). Positions 414–418 match the LXXLL motif; degenerate motif; sequence LHTML. Residues 511–587 form an SAW region; that stretch reads AYEGVDRVER…RSLIATSAWK (77 aa).

It belongs to the GRAS family. DELLA subfamily. In terms of assembly, may be a homodimer. Post-translationally, ubiquitinated. Upon GA application it is ubiquitinated, leading to its subsequent degradation. Strongly expressed in the vascular tissue and endodermis but barely in the inner cortical cells where arbuscule are formed during arbuscular mycorrhizal (AM) symbiosis.

It is found in the nucleus. In terms of biological role, probable transcriptional regulator that acts as a repressor of the gibberellin (GA) signaling pathway. Probably acts by participating in large multiprotein complexes that repress transcription of GA-inducible genes. Upon GA application, it is degraded by the proteasome, allowing the GA signaling pathway. Together with DELLA2, required to enable arbuscule development during arbuscular mycorrhizal (AM) symbiosis with AM fungi (e.g. Glomus versiforme) via the regulation of RAM1 which, in turn, regulates various AM genes (e.g. NSP1, NSP2, PT4, LEC5, RAM2, EXO70I, STR and RAD1). This chain is DELLA protein 1, found in Medicago truncatula (Barrel medic).